Consider the following 305-residue polypeptide: Ribonuclease BN (305 aa).

7 residues coordinate Zn(2+): histidine 64, histidine 66, aspartate 68, histidine 69, histidine 141, aspartate 212, and histidine 270. The Proton acceptor role is filled by aspartate 68.

It belongs to the RNase Z family. RNase BN subfamily. In terms of assembly, homodimer. The cofactor is Zn(2+).

In terms of biological role, zinc phosphodiesterase, which has both exoribonuclease and endoribonuclease activities. In Escherichia coli O7:K1 (strain IAI39 / ExPEC), this protein is Ribonuclease BN.